We begin with the raw amino-acid sequence, 566 residues long: MKMQKGNVLLMFGLLLHLEAATNSNETSTSANTGSSVISSGASTATNSGSSVTSSGVSTATISGSSVTSNGVSIVTNSEFHTTSSGISTATNSEFSTVSSGISIATNSESSTTSSGASTATNSESSTPSSGASTATNSDSSTTSSGASTATNSDSSTTSSEASTATNSESSTTSSGASTATNSESSTVSSRASTATNSESSTTSSGASTATNSESRTTSNGAGTATNSESSTTSSGASTATNSESSTPSSGAGTATNSESSTTSSGAGTATNSESSTVSSGISTVTNSESSTPSSGANTATNSESSTTSSGANTATNSDSSTTSSGASTATNSESSTTSSGASTATNSESSTTSSGASTATNSGSSTTSSGTSTATNSESSTVSSGASTATTSESSTTSSGASTATNSESSTVSSGASTATNSESSTTSSGANTATNSGSSVTSAGSGTAALTGMHTTSHSASTAVSEAKPGGSLVPWEIFLITLVSVVAAVGLFAGLFFCVRNSLSLRNTFNTAVYHPHGLNHGLGPGPGGNHGAPHRPRWSPNWFWRRPVSSIAMEMSGRNSGP.

The signal sequence occupies residues 1–24; that stretch reads MKMQKGNVLLMFGLLLHLEAATNS. An N-linked (GlcNAc...) asparagine glycan is attached at N25. Positions 25-68 are disordered; the sequence is NETSTSANTGSSVISSGASTATNSGSSVTSSGVSTATISGSSVT. The Extracellular portion of the chain corresponds to 25–479; it reads NETSTSANTG…KPGGSLVPWE (455 aa). Repeat copies occupy residues 31 to 44, 45 to 59, 60 to 74, 75 to 89, 90 to 104, 105 to 119, 120 to 134, 135 to 149, 150 to 164, 165 to 179, 180 to 194, 195 to 209, 210 to 224, 225 to 239, 244 to 254, 255 to 269, 270 to 284, 285 to 299, 300 to 314, 315 to 329, 330 to 344, 345 to 359, 360 to 374, 375 to 389, 390 to 404, 405 to 419, 420 to 434, and 435 to 449. Residues 31–435 form a 28 X 15 AA approximate tandem repeats region; sequence ANTGSSVISS…STTSSGANTA (405 aa). A disordered region spans residues 106–456; sequence TNSESSTTSS…SGTAALTGMH (351 aa). Residues 480-500 form a helical membrane-spanning segment; sequence IFLITLVSVVAAVGLFAGLFF. Over 501–566 the chain is Cytoplasmic; sequence CVRNSLSLRN…MEMSGRNSGP (66 aa). The tract at residues 521–566 is cytoplasmic tail; that stretch reads GLNHGLGPGPGGNHGAPHRPRWSPNWFWRRPVSSIAMEMSGRNSGP.

Post-translationally, O-glycosylated. In terms of tissue distribution, expressed in lung, large intestine, thymus, and testis. Expressed in normal and malignant bronchial epithelial cells.

The protein localises to the cell membrane. The protein is Mucin-21 (MUC21) of Homo sapiens (Human).